The chain runs to 91 residues: DNA-directed RNA polymerase subunit omega (91 aa).

It belongs to the RNA polymerase subunit omega family. As to quaternary structure, the RNAP catalytic core consists of 2 alpha, 1 beta, 1 beta' and 1 omega subunit. When a sigma factor is associated with the core the holoenzyme is formed, which can initiate transcription.

It catalyses the reaction RNA(n) + a ribonucleoside 5'-triphosphate = RNA(n+1) + diphosphate. Functionally, promotes RNA polymerase assembly. Latches the N- and C-terminal regions of the beta' subunit thereby facilitating its interaction with the beta and alpha subunits. The chain is DNA-directed RNA polymerase subunit omega from Pseudoalteromonas translucida (strain TAC 125).